Consider the following 155-residue polypeptide: Microsomal glutathione S-transferase 1 (155 aa).

Residues Asn3–Glu9 are Lumenal-facing. A helical transmembrane segment spans residues Asn10–Ala33. Residues Thr34 to Tyr62 are Cytoplasmic-facing. Arg38 contacts glutathione. Residues Lys42, Lys55, and Lys60 each carry the N6-acetyllysine modification. A helical transmembrane segment spans residues Leu63–Ser96. Residues Arg73, Arg74, His76, and Glu81 each contribute to the glutathione site. At Gly97–Asp99 the chain is on the lumenal side. The chain crosses the membrane as a helical span at residues Leu100–Thr123. Tyr121 contributes to the glutathione binding site. Residues Pro124–Pro128 are Cytoplasmic-facing. Residues Asn129–Leu148 traverse the membrane as a helical segment. At Leu149–Leu155 the chain is on the lumenal side.

This sequence belongs to the MAPEG family. Homotrimer; The trimer binds only one molecule of glutathione.

It is found in the endoplasmic reticulum membrane. The protein resides in the mitochondrion outer membrane. The enzyme catalyses RX + glutathione = an S-substituted glutathione + a halide anion + H(+). Functionally, conjugation of reduced glutathione to a wide number of exogenous and endogenous hydrophobic electrophiles. The polypeptide is Microsomal glutathione S-transferase 1 (MGST1) (Bos taurus (Bovine)).